Reading from the N-terminus, the 147-residue chain is Deoxyuridine 5'-triphosphate nucleotidohydrolase (147 aa).

Substrate is bound by residues 63 to 65, Asn76, and 80 to 82; these read RSG and TID.

Belongs to the dUTPase family. The cofactor is Mg(2+).

It carries out the reaction dUTP + H2O = dUMP + diphosphate + H(+). The protein operates within pyrimidine metabolism; dUMP biosynthesis; dUMP from dCTP (dUTP route): step 2/2. Its function is as follows. This enzyme is involved in nucleotide metabolism: it produces dUMP, the immediate precursor of thymidine nucleotides and it decreases the intracellular concentration of dUTP so that uracil cannot be incorporated into DNA. In Chlamydia caviae (strain ATCC VR-813 / DSM 19441 / 03DC25 / GPIC) (Chlamydophila caviae), this protein is Deoxyuridine 5'-triphosphate nucleotidohydrolase.